Here is a 619-residue protein sequence, read N- to C-terminus: MEFPGGNDNYLTITGPSHPFLSGAETFHTPSLGDEEFEIPPISLDSDPSLAVSDVVAHFDDLADPSSSQDGSFSAQYGVQTLDMPVGMTHGLMEQGGGLLSGGLTMDLDHSIGTQYSANPPVTIDVPMTDMTSGLMGHSQLTTIDQSELSSQLGLSLGGGTILPPAQSPEDRLSTTPSPTNSLHEDGVDDFRRQLPAQKTVVVETGKKQKAPKKRKKKDPNEPQKPVSAYALFFRDTQAAIKGQNPNATFGEVSKIVASMWDSLGEEQKQVYKRKTEAAKKEYLKALAAYKDNQECQATVETVELDPVPQSQTPSPPPVTTADPASPAPASTESPALSPCIVVNSTLSSYVANQAFSGPGGQPNITKLIITKQMLPSSITMSQGGMVTVIPATVVTSRGLQLGQTSTATIQPSQQAQIATRSVLQAAAAAAASMQLPPPRLQPPPLQQMPQPPTQQQVTILQQPPPLQAMQQPPPQKVRINLQQQPPPLQSKIVPPPALKMQATVLPPTVESSPEQPMNSSPEAHTVEATSPETICEMIADVVPEVESPSQMDVELVSGSPVTLSPQPRCVRSGCENPPVISKDWDNEYCSNECVVKHCRDVFLAWVASRNPNSVVLVK.

Disordered regions lie at residues 155–227 (LSLG…QKPV), 304–335 (ELDP…TESP), and 436–458 (LPPP…QQQV). T176 is subject to Phosphothreonine. A phosphoserine mark is found at S178 and S182. A compositionally biased stretch (basic and acidic residues) spans 183–193 (LHEDGVDDFRR). Residues 208-218 (KQKAPKKRKKK) are compositionally biased toward basic residues. The short motif at 213 to 218 (KKRKKK) is the Nuclear localization signal element. The HMG box DNA-binding region spans 223–291 (PQKPVSAYAL…EYLKALAAYK (69 aa)). At T313 the chain carries Phosphothreonine. S315 carries the post-translational modification Phosphoserine. Residues 320–335 (TTADPASPAPASTESP) are compositionally biased toward low complexity. The segment covering 436-453 (LPPPRLQPPPLQQMPQPP) has biased composition (pro residues). R479 carries the post-translational modification Asymmetric dimethylarginine. A phosphoserine mark is found at S531, S548, S550, S558, S560, and S565.

In terms of assembly, component of the PNUTS-PP1 phosphatase complex, composed of PPP1R10/PNUTS, TOX4, WDR82 and PPP1CA or PPP1CB or PPP1CC. Interacts with PPP1R10/PNUTS. Interacts with FOXO1 and CREB1 (increased by cAMP); FOXO1 and CREB1 are required for full induction of TOX4-dependent activity and the interactions are inhibited by insulin.

The protein resides in the nucleus. It localises to the chromosome. Its activity is regulated as follows. In liver, recruited to target gene promoters following treatment with dexamethasone and cAMP. Binding is decreased in presence of insulin. Functionally, transcription factor that modulates cell fate reprogramming from the somatic state to the pluripotent and neuronal fate. In liver, controls the expression of hormone-regulated gluconeogenic genes such as G6PC1 and PCK1. This regulation is independent of the insulin receptor activation. Also acts as a regulatory component of protein phosphatase 1 (PP1) complexes. Component of the PNUTS-PP1 protein phosphatase complex, a PP1 complex that regulates RNA polymerase II transcription pause-release. PNUTS-PP1 also plays a role in the control of chromatin structure and cell cycle progression during the transition from mitosis into interphase. This is TOX high mobility group box family member 4 (Tox4) from Rattus norvegicus (Rat).